A 91-amino-acid chain; its full sequence is MARVTVQDAVEKIGNRFDLVLVAARRARQLQTGGKDPLVAEENDKVTVIALREVEEGLINGKILDVRERQEQQEQEAAEMQAVSAIAESRR.

Belongs to the RNA polymerase subunit omega family. In terms of assembly, the RNAP catalytic core consists of 2 alpha, 1 beta, 1 beta' and 1 omega subunit. When a sigma factor is associated with the core the holoenzyme is formed, which can initiate transcription.

The catalysed reaction is RNA(n) + a ribonucleoside 5'-triphosphate = RNA(n+1) + diphosphate. Functionally, promotes RNA polymerase assembly. Latches the N- and C-terminal regions of the beta' subunit thereby facilitating its interaction with the beta and alpha subunits. The chain is DNA-directed RNA polymerase subunit omega from Photorhabdus laumondii subsp. laumondii (strain DSM 15139 / CIP 105565 / TT01) (Photorhabdus luminescens subsp. laumondii).